The following is a 92-amino-acid chain: Small ribosomal subunit protein uS19 (92 aa).

Belongs to the universal ribosomal protein uS19 family.

Protein S19 forms a complex with S13 that binds strongly to the 16S ribosomal RNA. This is Small ribosomal subunit protein uS19 from Bacillus thuringiensis subsp. konkukian (strain 97-27).